The chain runs to 267 residues: Undecaprenyl-diphosphatase 1 (267 aa).

The next 8 membrane-spanning stretches (helical) occupy residues 6–26, 41–60, 83–103, 109–129, 142–162, 185–205, 217–237, and 244–264; these read VLVVALIQGLGEVLPFGAAGL, AALSVAAHAGILLALMIYFW, HLLLHVLAGTIPAAIVGWLVL, LVGQSGAAIILILGGVLLWGC, MSWVGAAGLGALQILSLVPGV, FSMLLAMPLILGHGVKTFWGL, LLMAMATAGLAALIGLAGMMA, and FVPFAILRIGFGIAVLGLVYF.

This sequence belongs to the UppP family.

It is found in the cell inner membrane. The catalysed reaction is di-trans,octa-cis-undecaprenyl diphosphate + H2O = di-trans,octa-cis-undecaprenyl phosphate + phosphate + H(+). Functionally, catalyzes the dephosphorylation of undecaprenyl diphosphate (UPP). Confers resistance to bacitracin. This is Undecaprenyl-diphosphatase 1 from Paramagnetospirillum magneticum (strain ATCC 700264 / AMB-1) (Magnetospirillum magneticum).